Consider the following 572-residue polypeptide: Formate--tetrahydrofolate ligase (572 aa).

65–72 contributes to the ATP binding site; that stretch reads TPLGEGKT.

The protein belongs to the formate--tetrahydrofolate ligase family.

The enzyme catalyses (6S)-5,6,7,8-tetrahydrofolate + formate + ATP = (6R)-10-formyltetrahydrofolate + ADP + phosphate. Its pathway is one-carbon metabolism; tetrahydrofolate interconversion. The protein is Formate--tetrahydrofolate ligase of Chloroflexus aurantiacus (strain ATCC 29366 / DSM 635 / J-10-fl).